The primary structure comprises 311 residues: Pantothenate synthetase (311 aa).

Position 43-50 (43-50) interacts with ATP; the sequence is MGALHEGH. Histidine 50 (proton donor) is an active-site residue. Glutamine 75 is a (R)-pantoate binding site. Glutamine 75 contributes to the beta-alanine binding site. Residue 161–164 participates in ATP binding; it reads GEKD. Glutamine 167 is a (R)-pantoate binding site. ATP is bound by residues valine 190 and 198–201; that span reads MSSR.

The protein belongs to the pantothenate synthetase family. Homodimer.

The protein localises to the cytoplasm. The enzyme catalyses (R)-pantoate + beta-alanine + ATP = (R)-pantothenate + AMP + diphosphate + H(+). The protein operates within cofactor biosynthesis; (R)-pantothenate biosynthesis; (R)-pantothenate from (R)-pantoate and beta-alanine: step 1/1. Its function is as follows. Catalyzes the condensation of pantoate with beta-alanine in an ATP-dependent reaction via a pantoyl-adenylate intermediate. This is Pantothenate synthetase from Mycolicibacterium vanbaalenii (strain DSM 7251 / JCM 13017 / BCRC 16820 / KCTC 9966 / NRRL B-24157 / PYR-1) (Mycobacterium vanbaalenii).